A 254-amino-acid chain; its full sequence is Small ribosomal subunit protein mS40 (254 aa).

Residues 1–33 (MAAPLRHTLLKLVPTLLRSSYVAQVPLQTLCTR) constitute a mitochondrion transit peptide. A Phosphoserine modification is found at Ser-47. The interval 218-254 (YQGNLLEESGPPPESMPEMPTTPPAESSIEQPGSQSA) is disordered. Pro residues predominate over residues 227–240 (GPPPESMPEMPTTP).

It belongs to the bacterial ribosomal protein bS18 family. Mitochondrion-specific ribosomal protein mS40 subfamily. As to quaternary structure, component of the mitochondrial ribosome small subunit (28S) which comprises a 12S rRNA and about 30 distinct proteins.

It localises to the mitochondrion. This chain is Small ribosomal subunit protein mS40 (Mrps18b), found in Mus musculus (Mouse).